Here is a 59-residue protein sequence, read N- to C-terminus: Ribosome biogenesis protein Nop10 (59 aa).

The protein belongs to the NOP10 family.

Its function is as follows. Involved in ribosome biogenesis; more specifically in 18S rRNA pseudouridylation and in cleavage of pre-rRNA. The chain is Ribosome biogenesis protein Nop10 from Thermococcus sibiricus (strain DSM 12597 / MM 739).